Consider the following 112-residue polypeptide: MNTIPTRCLLGGLLALSLLAYAGEGDGTQHIVIDSGDTARSWEAARQSQEQWNATHGLRNKVNTRVEKDFDRYDQAVDLQEKCNSSQNVNAYWEPNTSRCLDRRTGRSLLAP.

An N-terminal signal peptide occupies residues 1–22; it reads MNTIPTRCLLGGLLALSLLAYA.

This sequence belongs to the UPF0482 family.

The polypeptide is UPF0482 protein SG1468 (Sodalis glossinidius (strain morsitans)).